We begin with the raw amino-acid sequence, 501 residues long: TNF receptor-associated factor 2 (501 aa).

Residue Ala2 is modified to N-acetylalanine. A Phosphoserine modification is found at Ser5. Thr7 is subject to Phosphothreonine. Residue Ser11 is modified to Phosphoserine. Residue Thr22 is modified to Phosphothreonine. Lys31 is covalently cross-linked (Glycyl lysine isopeptide (Lys-Gly) (interchain with G-Cter in ubiquitin)). The RING-type zinc finger occupies 34–73; the sequence is CSACKNILRRPFQAQCGHRYCSFCLTSILSSGPQNCAACV. Thr117 carries the post-translational modification Phosphothreonine; by PKC. 2 TRAF-type zinc fingers span residues 124–180 and 177–233; these read CHEG…VHYE and VHYE…ENLQ. Residues 283–293 are important for interaction with BIRC2 and BIRC3; sequence ENIVCVLNREV. Residues 298-348 are a coiled coil; that stretch reads VTAEACSRQHRLDQDKIEALSNKVQQLERSIGLKDLAMADLEQKVSELEVS. Lys320 participates in a covalent cross-link: Glycyl lysine isopeptide (Lys-Gly) (interchain with G-Cter in ubiquitin). The MATH domain maps to 351-496; sequence DGVFIWKISD…DDAIFIKAIV (146 aa).

The protein belongs to the TNF receptor-associated factor family. A subfamily. As to quaternary structure, homotrimer. Heterotrimer with TRAF1. Heterotrimer with TRAF3 (via TRAF domain). The domain containing the RING-type and the first TRAF-type zinc finger can also form homodimers (in vitro). Interacts with TNFRSF1B/TNFR2. Interacts with TNFRSF5/CD40. Interacts with TNFRSF4, TNFRSF7/CD27, TNFRSF8/CD30, TNFRSF9/CD137, TNFRSF11A/RANK, TNFRSF13B/TACI, TNFRSF14, TNFRSF16/NGFR, TNFRSF17/BCMA, TNFRSF18/AITR, TNFRSF19/TROY, TNFRSF19L/RELT and EDAR. Stimulation of TNF-alpha receptor TNFRSF1A leads to the formation of two distinct signaling complexes. Plasma membrane-bound complex I is composed of TNFRSF1A, TRADD, RIPK1, TRAF2 and BIRC2/c-IAP1 or BIRC3 which interacts with CHUCK/IKK-alpha, IKBKB/IKK-beta and IKBKG/IKK-gamma promoting cell survival. Subsequently, TRADD, RIPK1 and TRAF2 dissociate from TNFRSF1A and form cytoplasmic complex II with FADD and caspase CASP8 promoting cell apoptosis. Interacts with TRADD. Identified in a complex with TNFRSF1A, RIPK1 and IKBKB/IKK-beta. Interacts with RIPK2. Interacts with BIRC2 and BIRC3 N-terminus; a single BIRC2 or BIRC3 molecule interacts with a heterotrimer formed by TRAF1 and TRAF2, or a TRAF2 homotrimer. Identified in a complex composed of TRAF2, TRAF3, BIRC2 and BIRC3. Interacts with BIRC2; the interaction promotes BIRC2 stability. Interaction with BIRC2 and/or BIRC3 is essential for ubiquitination of IKBKE, degradation of NFKBIA and activation of NF-kappa-B. Within complex I, phosphorylated TRAF2 interacts (via 'Lys-63'-linked polyubiquitin chains) with CHUCK/IKK-alpha, IKBKB/IKK-beta, IKBKG/IKK-gamma TAB2, TAB3 and TAK1 in response to TNF-alpha stimulation. Within complex I, interacts with UXT isoform 1 (via TPQE motif); the interaction prevents the recruitment of FADD and CASP8/caspase 8 to complex I. Forms a complex composed of TNFRSF8/CD30 or TNFRSF1B/TNFR2, and TRAF1, TRAF2 and E3 ligase TRAIP. Within the complex, interacts with TRAIP; the interaction inhibits TRAF2-mediated NF-kappa B activation. Component of a complex composed of TANK and TBK1. Interacts with TRPC4AP. Interacts with MAP3K1/MEKK1, MAP3K5/ASK1 and MAP3K11/MLK3 in response to TNF-alpha stimulation; the interaction leads to JNK activation and interaction with MAP3K5 is inhibited by PRMT1. Component of a complex composed of MAP3K14/NIK BIRC3 and TRAF3; the interaction leads to BIRC2/3-mediated ubiquitination of TRAF3 upon CD40 engagement in a TRAF2-dependent manner. Interacts with MAP3K14/NIK in response to TNF-alpha stimulation; the interaction leads to NF-kappa B activation. Interacts with PEG3; the interaction may promote TRAF2-mediated NF-kappa B activation. Interacts with HIVEP3; the interaction may inhibit TNF-alpha-TRAF2-mediated NF-kappa B and JNK activation. Interacts with TANK/ITRAF; the interaction prevents interaction between TNFRSF1B/TNFR2 and TRAF2. Interacts with deubiquitinating enzyme CYLD; the interaction results in the deubiquitination and inactivation of TRAF2. Interacts with SIAH2; the interaction leads to TRAF2 ubiquitination and degradation. Interacts with E2 conjugating enzyme UBE2N/Ubc13, E3 ligase ITCH and RNF11 in response to TNF-alpha stimulation. Interacts with ubiquitin-editing enzyme TNFAIP3/A20 in response to TNF-alpha stimulation; the interaction promotes TRAF2 dissociation from UBE2N/Ubc13, ITCH, RNF11 and TAX1BP1 and prevents prolonged TRAF-2 ubiquitination. Interacts with TAX1BP1 in response to TNF-alpha stimulation; the interaction promotes TRAF2 dissociation from UBE2N/Ubc13 and TNFAIP3/A20, and prevents prolonged TRAF-2 ubiquitination. Interacts (via C-terminus) with EIF2AK2/PKR (via the kinase catalytic domain). Interacts with deubiquitinating enzyme USP48. Interacts with PTPN2; probably involved in TNF-mediated signaling. Interacts with Toll-like receptor TLR4/3 adapter TICAM1/TRIF; the interaction may promote TICAM1 ubiquitination. Interacts with kinase/endoribonuclease ERN1/IRE1 and DAB2IP in response to ER stress; the interaction requires DAB2IP. Interacts with ERN1/IRE1 and TAOK3 in response to ER stress; the interaction may promote TRAF2 phosphorylation. Interacts (via zinc fingers) with DAB2IP (via C-terminus PER domain) in response to TNF-alpha stimulation. Interacts with CASP8AP2/FLASH. Interacts with NFATC2IP; the interaction may repress IL-4 production in T cells. Interacts with kinase CDK9. Interacts with sphingosine kinase 1 SPHK1. Interacts with kinase TNIK. Interacts with TRAFD1. Interacts with DNA phosphodiesterase TDP2. Interacts with MAVS/IPS1. Interacts with CARD14. Interacts with GPS2. Interacts with XPNPEP3. Interacts with RIPK3. Interacts with RELL2. Interacts with LRRC19. Interacts with GAPDH; promoting TRAF2 ubiquitination. Post-translationally, phosphorylated at several serine residues within the first 128 amino acid residues. Phosphorylated at Thr-117 in response to signaling via TNF and TNFRSF1A. Phosphorylation at Thr-117 is required for 'Lys-63'-linked polyubiquitination, but not for 'Lys-48'-linked polyubiquitination. Phosphorylation at Thr-117 is important for interaction with IKKA and IKKB, activation of IKK and subsequent activation of NF-kappa-B. Undergoes both 'Lys-48'-linked and 'Lys-63'-linked polyubiquitination. Polyubiquitinated via 'Lys-63'-linked ubiquitin in response to TNF signaling; this requires prior phosphorylation at Thr-117. 'Lys-63'-linked polyubiquitination promotes TRAF2-mediated activation of NF-kappa-B. Can be polyubiquitinated at several Lys residues via 'Lys-48'-linked ubiquitin chains in response to TNF signaling, leading to proteasomal degradation. Autoubiquitinated, leading to its subsequent proteasomal degradation. Polyubiquitinated by BIRC2 and SIAH2, leading to its subsequent proteasomal degradation. Not ubiquitinated by BIRC3 or SIAH1. Deubiquitinated by CYLD, a protease that specifically cleaves 'Lys-63'-linked polyubiquitin chains. Ubiquination is inhibited by LRRC19; inhiits proteasomal degradation. Ubiquitinated at Lys-320 by the SCF(FBXL2) complex, leading to its degradation by the proteasome. Ubiquitinated by E3 ubiquitin-protein ligase complex containing FBXO7; leading to repression of NF-kappa-B signaling. As to expression, isoform 1 and isoform 2 are expressed in spleen, adipose tissues, skeletal muscles, thymus, testis, heart, lung, brain. Isoform 2 is very weakly expressed in heart, lung and brain.

Its subcellular location is the cytoplasm. The catalysed reaction is S-ubiquitinyl-[E2 ubiquitin-conjugating enzyme]-L-cysteine + [acceptor protein]-L-lysine = [E2 ubiquitin-conjugating enzyme]-L-cysteine + N(6)-ubiquitinyl-[acceptor protein]-L-lysine.. It functions in the pathway protein modification; protein ubiquitination. Has very low E3 ubiquitin ligase activity in the absence of sphingosine-1-phosphate. E3 ubiquitin ligase activity is strongly activated by cytoplasmic sphingosine-1-phosphate. Its function is as follows. E3 ubiquitin-protein ligase that regulates activation of NF-kappa-B and JNK and plays a central role in the regulation of cell survival and apoptosis. Catalyzes 'Lys-63'-linked ubiquitination of target proteins, such as BIRC3, IKBKE, MLST8, RIPK1 and TICAM1. Is an essential constituent of several E3 ubiquitin-protein ligase complexes, where it promotes the ubiquitination of target proteins by bringing them into contact with other E3 ubiquitin ligases. Regulates BIRC2 and BIRC3 protein levels by inhibiting their autoubiquitination and subsequent degradation; this does not depend on the TRAF2 RING-type zinc finger domain. Plays a role in mediating activation of NF-kappa-B by EIF2AK2/PKR. In complex with BIRC2 or BIRC3, promotes ubiquitination of IKBKE. Acts as a regulator of mTORC1 and mTORC2 assembly by mediating 'Lys-63'-linked ubiquitination of MLST8, thereby inhibiting formation of the mTORC2 complex, while facilitating assembly of the mTORC1 complex. Required for normal antibody isotype switching from IgM to IgG. The polypeptide is TNF receptor-associated factor 2 (Traf2) (Mus musculus (Mouse)).